The sequence spans 89 residues: MEVARKALVAVAVLGGGAGVGSILFALVTPGELQKQSMLQEMPERDSRRRDEAVRTTELVMATLKDAAATKENVAWRRNWTVSGDGRSA.

Over 1-7 the chain is Mitochondrial matrix; sequence MEVARKA. A helical transmembrane segment spans residues 8–28; that stretch reads LVAVAVLGGGAGVGSILFALV. Positions 23–80 are mediates lipid-binding; sequence ILFALVTPGELQKQSMLQEMPERDSRRRDEAVRTTELVMATLKDAAATKENVAWRRNW. Topologically, residues 29–89 are mitochondrial intermembrane; that stretch reads TPGELQKQSM…WTVSGDGRSA (61 aa).

The protein belongs to the UQCC3 family. Associates with the ubiquinol-cytochrome c reductase complex (mitochondrial respiratory chain complex III(CIII) or cytochrome b-c1 complex). Interacts with UQCC1. Forms a complex, named COMC, composed of UQCC1, UQCC2; UQCC3 and UQCC4; mediates MT-CYB hemylation and association with the first nuclear-encoded complex III subunit UQCRQ. Probably cleaved by OMA1 under mitochondrial stress conditions.

The protein resides in the mitochondrion inner membrane. Functionally, required for the assembly of the ubiquinol-cytochrome c reductase complex (mitochondrial respiratory chain complex III or cytochrome b-c1 complex), mediating cytochrome b recruitment and probably stabilization within the complex. Thereby, plays an important role in ATP production by mitochondria. Cardiolipin-binding protein, it may also control the cardiolipin composition of mitochondria membranes and their morphology. The polypeptide is Ubiquinol-cytochrome-c reductase complex assembly factor 3 (Mus musculus (Mouse)).